A 171-amino-acid chain; its full sequence is Dual-action ribosomal maturation protein DarP (171 aa).

Positions 1–30 (MPKRPAENPEQSDDFVSKSQKKREMAERQE) are disordered.

It belongs to the DarP family.

The protein localises to the cytoplasm. Functionally, member of a network of 50S ribosomal subunit biogenesis factors which assembles along the 30S-50S interface, preventing incorrect 23S rRNA structures from forming. Promotes peptidyl transferase center (PTC) maturation. The chain is Dual-action ribosomal maturation protein DarP from Idiomarina loihiensis (strain ATCC BAA-735 / DSM 15497 / L2-TR).